Consider the following 270-residue polypeptide: Glucosamine-6-phosphate deaminase (270 aa).

Asp-72 (proton acceptor; for enolization step) is an active-site residue. The active-site For ring-opening step is the Asp-141. Catalysis depends on His-143, which acts as the Proton acceptor; for ring-opening step. Glu-148 functions as the For ring-opening step in the catalytic mechanism.

It belongs to the glucosamine/galactosamine-6-phosphate isomerase family. NagB subfamily. In terms of assembly, homohexamer.

It catalyses the reaction alpha-D-glucosamine 6-phosphate + H2O = beta-D-fructose 6-phosphate + NH4(+). Its pathway is amino-sugar metabolism; N-acetylneuraminate degradation; D-fructose 6-phosphate from N-acetylneuraminate: step 5/5. Its activity is regulated as follows. Allosterically activated by N-acetylglucosamine 6-phosphate (GlcNAc6P). Functionally, catalyzes the reversible isomerization-deamination of glucosamine 6-phosphate (GlcN6P) to form fructose 6-phosphate (Fru6P) and ammonium ion. This chain is Glucosamine-6-phosphate deaminase, found in Haemophilus influenzae (strain PittEE).